Reading from the N-terminus, the 616-residue chain is Homeodomain-interacting protein kinase 4 (616 aa).

Residues 11-347 (YDIIEVLGKG…PSAALRHPFV (337 aa)) form the Protein kinase domain. Residues 17–25 (LGKGTFGEV) and lysine 40 each bind ATP. The active-site Proton acceptor is the aspartate 136. The interval 486–616 (HKARKPPAGS…SFLQHVTGHH (131 aa)) is disordered. Residues 496–511 (KSDSNFSNLIRLSQVS) are compositionally biased toward polar residues. Serine 511 carries the phosphoserine modification.

The protein belongs to the protein kinase superfamily. CMGC Ser/Thr protein kinase family. HIPK subfamily. In terms of processing, autophosphorylated.

It localises to the cytoplasm. The enzyme catalyses L-seryl-[protein] + ATP = O-phospho-L-seryl-[protein] + ADP + H(+). It carries out the reaction L-threonyl-[protein] + ATP = O-phospho-L-threonyl-[protein] + ADP + H(+). Its function is as follows. Protein kinase that phosphorylates human TP53 at Ser-9, and thus induces TP53 repression of BIRC5 promoter. May act as a corepressor of transcription factors (Potential). The chain is Homeodomain-interacting protein kinase 4 (HIPK4) from Homo sapiens (Human).